The primary structure comprises 237 residues: 1-(5-phosphoribosyl)-5-[(5-phosphoribosylamino)methylideneamino] imidazole-4-carboxamide isomerase (237 aa).

Asp-8 functions as the Proton acceptor in the catalytic mechanism. The Proton donor role is filled by Asp-129.

The protein belongs to the HisA/HisF family.

The protein localises to the cytoplasm. It carries out the reaction 1-(5-phospho-beta-D-ribosyl)-5-[(5-phospho-beta-D-ribosylamino)methylideneamino]imidazole-4-carboxamide = 5-[(5-phospho-1-deoxy-D-ribulos-1-ylimino)methylamino]-1-(5-phospho-beta-D-ribosyl)imidazole-4-carboxamide. The protein operates within amino-acid biosynthesis; L-histidine biosynthesis; L-histidine from 5-phospho-alpha-D-ribose 1-diphosphate: step 4/9. The polypeptide is 1-(5-phosphoribosyl)-5-[(5-phosphoribosylamino)methylideneamino] imidazole-4-carboxamide isomerase (Alkaliphilus metalliredigens (strain QYMF)).